A 638-amino-acid chain; its full sequence is ATP-dependent zinc metalloprotease FtsH (638 aa).

Topologically, residues 1-15 (MDNNHKGPNDPNSKK) are cytoplasmic. Residues 16–36 (PLLQNPLLLIAIFGIIIFVAM) traverse the membrane as a helical segment. Residues 37 to 122 (RVMNSDEGFG…INYSGFSESN (86 aa)) lie on the Periplasmic side of the membrane. The helical transmembrane segment at 123–143 (FFADILGWLLPVLVILGLWMF) threads the bilayer. Residues 144 to 638 (MASRMQKNMG…RLVPLEEHAS (495 aa)) are Cytoplasmic-facing. 216–223 (GPPGTGKT) contributes to the ATP binding site. Zn(2+) is bound at residue H440. Residue E441 is part of the active site. Residues H444 and D517 each contribute to the Zn(2+) site.

It in the central section; belongs to the AAA ATPase family. In the C-terminal section; belongs to the peptidase M41 family. Homohexamer. It depends on Zn(2+) as a cofactor.

Its subcellular location is the cell inner membrane. Its function is as follows. Acts as a processive, ATP-dependent zinc metallopeptidase for both cytoplasmic and membrane proteins. Plays a role in the quality control of integral membrane proteins. The polypeptide is ATP-dependent zinc metalloprotease FtsH (Helicobacter felis (strain ATCC 49179 / CCUG 28539 / NCTC 12436 / CS1)).